The following is a 758-amino-acid chain: MTIVTNLSFPRIGARRELKRALESHWRGETDATQLQHTARELRARHWQLQRDTGVDLPPSNDFSLYDHVLDTAFLFDAIPQRYRALADADPLAGYFAMARGRQADGIDLHALEMTKWFDTNYHYLVPELHRDQHFALRGNKPIAEFEEALALGITTRPVLLGPVSFLLLSKTVDGSNRLDLLERLLPVYTQLLRQLQASGAEWVQIDEPTLVLDLDAQTQQAFRKAYAALNQGPRPKLLLTSYFGPLGDNLELALQLPADGLHIDLVRGTEQLDAVLNTLPAGRVLSAGLVNGRNIWRTALDNALTLARYAQGRIGKDHVWLAPSCSLLHVPVDLEQEKNLDADVRNWLAFAKQKLSELRVLADALDNKPEAETALTQTRQALEARRQSPKVHRPEVAQRLAALTPDTTQRNTAYPQRSQAQQQTLNLPAYPTTTIGSFPQTLEVREARAQFKSGKLSESDYETFLKAETERCIRTQEEIGLDVLVHGEFERNDMVEYFGEQLDGFIFTKLGWVQSYGSRCVKPPIIYGDVVRPAPMTVTWSAYAQSLTDKPMKGMLTGPVTMLQWSFVRDDQERAQTCRQIALALRDEVQDLEKAGIKVIQIDEPAIREGLPLRRGEWADYLNWAVESFRIASSNVRDTTQIHTHMCYSEFNDIIEAVAALDADVISIETSRSRMELLDAFVKFRYPNAIGPGVYDIHSPRVPQEEEMVLLLKKARAVLPPEQLWVNPDCGLKTRGWKETRAALQTMVHAAQRLRAE.

5-methyltetrahydropteroyltri-L-glutamate-binding positions include 16-19 and Lys-116; that span reads RELK. Residues 436–438 and Glu-489 each bind L-homocysteine; that span reads IGS. L-methionine is bound by residues 436–438 and Glu-489; that span reads IGS. 5-methyltetrahydropteroyltri-L-glutamate contacts are provided by residues 520–521 and Trp-566; that span reads RC. An L-homocysteine-binding site is contributed by Asp-604. Position 604 (Asp-604) interacts with L-methionine. Glu-610 serves as a coordination point for 5-methyltetrahydropteroyltri-L-glutamate. Zn(2+) is bound by residues His-646, Cys-648, and Glu-670. The active-site Proton donor is the His-699. Residue Cys-731 coordinates Zn(2+).

The protein belongs to the vitamin-B12 independent methionine synthase family. It depends on Zn(2+) as a cofactor.

It carries out the reaction 5-methyltetrahydropteroyltri-L-glutamate + L-homocysteine = tetrahydropteroyltri-L-glutamate + L-methionine. It functions in the pathway amino-acid biosynthesis; L-methionine biosynthesis via de novo pathway; L-methionine from L-homocysteine (MetE route): step 1/1. In terms of biological role, catalyzes the transfer of a methyl group from 5-methyltetrahydrofolate to homocysteine resulting in methionine formation. This is 5-methyltetrahydropteroyltriglutamate--homocysteine methyltransferase from Xylella fastidiosa (strain 9a5c).